The primary structure comprises 256 residues: Tyrosine-protein kinase-interacting protein (256 aa).

The segment covering 1 to 14 (MANEGEEIELTEFP) has biased composition (acidic residues). The tract at residues 1 to 49 (MANEGEEIELTEFPETEKERKDEEKLSSCSEETTNTSSSSGSDHVPVPI) is disordered. Residues 1–228 (MANEGEEIEL…DLKRLENKIN (228 aa)) are Cytoplasmic-facing. A compositionally biased stretch (basic and acidic residues) spans 15–26 (ETEKERKDEEKL). A compositionally biased stretch (low complexity) spans 27–42 (SSCSEETTNTSSSSGS). Position 114 is a phosphotyrosine; by host LCK (Tyr-114). Phosphotyrosine; by host is present on Tyr-127. Residues 146-155 (EDLQSFLEKY) are CSKH/LBD2. The segment at 162 to 183 (PKRDLSATWDPGMPTPPLPPRP) is disordered. Positions 174–183 (MPTPPLPPRP) are SH3B/LBD1. The span at 174 to 183 (MPTPPLPPRP) shows a compositional bias: pro residues. The chain crosses the membrane as a helical span at residues 229-249 (VIICLVVVILAVLLLVTVLSI). Over 250–256 (LHIGMKS) the chain is Extracellular.

As to quaternary structure, binds host LCK, human WDR48 and human NXF1/TAP. Forms a complex with activated LCK and STAT1 and STAT3. In terms of processing, phosphorylation on Tyr-114 acts as a docking site for the recruitment of STATs 1 and 3.

The protein localises to the host cell membrane. Its function is as follows. Plays a critical role in virus induced T-cell transformation. Binds to T-cell-specific tyrosine kinase LCK SH2 and SH3 domains, thereby activating its kinase activity. Once phosphorylated by host LCK, forms a complex with at least STAT 1 and 3, resulting on the phosphorylation of STAT3 and presumably STAT1, and their migration into the nucleus to induce transcription of target genes. Stimulates host ILF3/NF-AT-90 activity. Association with host NXF1/TAP transduces the signal up-regulating surface expression of adhesion molecules as well as activating NF-kappa-B activity. Acts synergistically with StpC to stimulate NF-kappa-B activity and interleukin-2 gene expression. Activation of NF-kappa-B protects lymphocytes from apoptosis, thereby facilitating viral induced cell transformation. May cause down-regulation of host LCK and cell apoptosis when stably overexpressed ex vivo. Interaction with WDR48 induce degradation of T-cell receptor in a lysosome-dependent fashion, when both proteins are overexpressed. The biological effect of this interaction remains controversial since no T-cell receptor degradation is observed in infected cells. The polypeptide is Tyrosine-protein kinase-interacting protein (Saimiri sciureus (Common squirrel monkey)).